The primary structure comprises 100 residues: Class II hydrophobin 4 (100 aa).

The first 17 residues, M1 to A17, serve as a signal peptide directing secretion. 4 cysteine pairs are disulfide-bonded: C29–C79, C40–C70, C41–C53, and C80–C92.

This sequence belongs to the cerato-ulmin hydrophobin family.

Its subcellular location is the secreted. The protein localises to the cell wall. In terms of biological role, aerial growth, conidiation, and dispersal of filamentous fungi in the environment rely upon a capability of their secreting small amphipathic proteins called hydrophobins (HPBs) with low sequence identity. Class I can self-assemble into an outermost layer of rodlet bundles on aerial cell surfaces, conferring cellular hydrophobicity that supports fungal growth, development and dispersal; whereas Class II form highly ordered films at water-air interfaces through intermolecular interactions but contribute nothing to the rodlet structure. Does not seem to be important for the ability to cause seedling disease. The polypeptide is Class II hydrophobin 4 (Gibberella moniliformis (Maize ear and stalk rot fungus)).